A 559-amino-acid chain; its full sequence is Poly(U)-binding-splicing factor PUF60 (559 aa).

Residues 1-516 (MATATIALQV…EDAEIIVKIF (516 aa)) are inhibits homodimerization. Glycyl lysine isopeptide (Lys-Gly) (interchain with G-Cter in SUMO2) cross-links involve residues Gln-14 and Lys-43. A Phosphothreonine modification is found at Thr-60. The interval 77–559 (QSIKSVLVKQ…ERFDNSDLSA (483 aa)) is inhibits transcriptional repression, interaction with ERCC3 and apoptosis induction. Residue Lys-80 forms a Glycyl lysine isopeptide (Lys-Gly) (interchain with G-Cter in SUMO2) linkage. Ser-112 carries the phosphoserine modification. 2 RRM domains span residues 129–207 (CRVY…RPSN) and 226–304 (NRIY…KAVT). Ser-244 is modified (phosphoserine). Lys-251 bears the N6-acetyllysine mark. Residue Thr-314 is modified to Phosphothreonine. The segment at 416-437 (KKEKEEEELFPESERPEMLSEQ) is disordered. Residue Lys-419 forms a Glycyl lysine isopeptide (Lys-Gly) (interchain with G-Cter in SUMO2) linkage. Basic and acidic residues predominate over residues 427-437 (ESERPEMLSEQ). Residue Lys-454 is modified to N6-acetyllysine. Residue Lys-458 forms a Glycyl lysine isopeptide (Lys-Gly) (interchain with G-Cter in SUMO2) linkage. Residues 462 to 549 (TVMVLRNMVD…RKVVAEVYDQ (88 aa)) form the RRM 3; atypical domain.

This sequence belongs to the RRM half pint family. As to quaternary structure, homodimer. Associates with the spliceosome. Found in a complex with RO60 and Y5 RNA. Found in a complex with FUBP1 and far upstream element (FUSE) DNA segment. Interacts directly with ERCC3. Interacts with CDK7 and GTF2H1. Interacts with SRSF11/P54. Does not interact with ERCC3 in xeroderma pigmentosum complementation group B (XPB) cells. Interacts with ARGLU1; interaction may be involved in ARGLU1-mediated modulation of alternative splicing. In terms of tissue distribution, isoform 2 is expressed in colonic epithelium and colorectal epithelium cancer (at protein level). Isoform 6 is expressed in colorectal epithelial cancer but below detection level in colonic epithelium. Expressed in heart, brain, placenta, lung, liver, skeletal muscle, kidney, pancreas, spleen, thymus, prostate, testis, ovary, small intestine, colon and peripheral blood leukocytes.

The protein resides in the nucleus. In terms of biological role, DNA- and RNA-binding protein, involved in several nuclear processes such as pre-mRNA splicing, apoptosis and transcription regulation. In association with FUBP1 regulates MYC transcription at the P2 promoter through the core-TFIIH basal transcription factor. Acts as a transcriptional repressor through the core-TFIIH basal transcription factor. Represses FUBP1-induced transcriptional activation but not basal transcription. Decreases ERCC3 helicase activity. Does not repress TFIIH-mediated transcription in xeroderma pigmentosum complementation group B (XPB) cells. Is also involved in pre-mRNA splicing. Promotes splicing of an intron with weak 3'-splice site and pyrimidine tract in a cooperative manner with U2AF2. Involved in apoptosis induction when overexpressed in HeLa cells. Isoform 6 failed to repress MYC transcription and inhibited FIR-induced apoptosis in colorectal cancer. Isoform 6 may contribute to tumor progression by enabling increased MYC expression and greater resistance to apoptosis in tumors than in normal cells. Modulates alternative splicing of several mRNAs. Binds to relaxed DNA of active promoter regions. Binds to the pyrimidine tract and 3'-splice site regions of pre-mRNA; binding is enhanced in presence of U2AF2. Binds to Y5 RNA in association with RO60. Binds to poly(U) RNA. The chain is Poly(U)-binding-splicing factor PUF60 from Homo sapiens (Human).